Here is a 425-residue protein sequence, read N- to C-terminus: RNA-binding protein L (425 aa).

The span at 1 to 20 (MQQPPSQPQPGMGGPPPPPQ) shows a compositional bias: pro residues. Residues 1-82 (MQQPPSQPQP…AAPPPQAMPA (82 aa)) are disordered. A compositionally biased stretch (low complexity) spans 21–31 (GAAGQPPQWGA). Over residues 32 to 80 (IPPPMPPHQYGAPPPQQPPAMWGQPPPQAHYGQVPPPQPYYAAPPPQAM) the composition is skewed to pro residues. 3 RRM domains span residues 90 to 170 (KTLW…WASA), 180 to 259 (YTIF…PAAN), and 284 to 356 (TTIF…WGRS).

The protein belongs to the polyadenylate-binding RBP45 family. In terms of assembly, interacts with RBP-P. Interacts with RAB5A.

The protein localises to the nucleus. The protein resides in the cytoplasm. In terms of biological role, RNA-binding protein that binds to a cis-localization element or zipcode, within the 5'-CDS of prolamine RNA. Binds strongly to glutelin and prolamin mRNAs, particularly to 3'-UTR and zipcode RNA. Recognizes and binds to glutelin zipcode RNA, which is required for proper mRNA localization to cisternal endoplasmic reticulum. Recognizes and binds to prolamin zipcode RNA, which is required for proper mRNA localization to the protein body endoplasmic reticulum that delimits the prolamine intracisternal inclusion granules. Required for the correct localization of glutelin and prolamine mRNA in endosperm cells during grain development. RBP-L and RBP-P form a quaternary complex with the membrane trafficking factors NSF and RAB5A. This quaternay complex carries glutelin mRNAs for active transport on endosomes to the cortical endoplasmic reticulum membrane, and enables endosome-mediated glutelin mRNA transport in endosperm cells. This is RNA-binding protein L from Oryza sativa subsp. japonica (Rice).